Reading from the N-terminus, the 357-residue chain is Acidic fibroblast growth factor intracellular-binding protein (357 aa).

T2 is modified (N-acetylthreonine).

In terms of assembly, binds to internalized FGF1; this interaction is increased in the presence of CSNKB, suggesting a possible cooperative interaction between CSNKB and FIBP in binding to FGF1.

It localises to the nucleus. Its subcellular location is the endomembrane system. In terms of biological role, may be involved in mitogenic function of FGF1. May mediate with IER2 FGF-signaling in the establishment of laterality in the embryo. The polypeptide is Acidic fibroblast growth factor intracellular-binding protein (FIBP) (Chlorocebus aethiops (Green monkey)).